Consider the following 418-residue polypeptide: Adenylosuccinate synthetase (418 aa).

Residues 12-18 (GDEGKGK) and 40-42 (GHT) contribute to the GTP site. The active-site Proton acceptor is the aspartate 13. Mg(2+) is bound by residues aspartate 13 and glycine 40. IMP-binding positions include 13–16 (DEGK), 38–41 (NAGH), threonine 128, arginine 142, glutamine 221, threonine 236, and arginine 299. The active-site Proton donor is histidine 41. Residue 295-301 (ATTGRNR) participates in substrate binding. GTP contacts are provided by residues arginine 301, 327–329 (KAD), and 399–401 (SYG).

It belongs to the adenylosuccinate synthetase family. As to quaternary structure, homodimer. Requires Mg(2+) as cofactor.

It localises to the cytoplasm. It catalyses the reaction IMP + L-aspartate + GTP = N(6)-(1,2-dicarboxyethyl)-AMP + GDP + phosphate + 2 H(+). It functions in the pathway purine metabolism; AMP biosynthesis via de novo pathway; AMP from IMP: step 1/2. Its function is as follows. Plays an important role in the de novo pathway of purine nucleotide biosynthesis. Catalyzes the first committed step in the biosynthesis of AMP from IMP. This is Adenylosuccinate synthetase from Finegoldia magna (strain ATCC 29328 / DSM 20472 / WAL 2508) (Peptostreptococcus magnus).